A 461-amino-acid chain; its full sequence is MSVLLETSLGDIVIDLLVDESPKACENFLKLCKVKYYNFSPFYSVQKNFSFQTGDPIGPDSPDSNGGSSIWGLLEGPSKQAVPLALPPKLKHDEKGTVSMAAVPSPHDPDLRLVTSQFIVTLGDNLDYLDGKAVIFGKVVEGFDVLEKVNEAFIDDRGRPLKDIRIRHTVILDDPFDDPPGLVEPPESPLPTKAQLATVRIADDEDLGDDMDEASMEKLRREREARAQALTLEMVGDLPFAEVKPPENVLFVCKLNPVTQDEDLELIFSRFGKILSCEVIRDKRTGDSLQYAFIEFESQKDCEQAYFKMQGVLIDDHRIHVDFSQSVSKLSESWRDATVKKRSAQRGGFGGVAGLEKKRQYRASENARERANYNMVFDKNDNRRSAPRERSYSRSPQRNNYRDRRDSRSPRRDSYRSRYGDRSNSRSPPLRDRDRIRTDYYDNDRRRGYRDDDRYRDRRRR.

Positions Met-1–Ile-171 constitute a PPIase cyclophilin-type domain. Residues Asn-248–Ser-326 enclose the RRM domain. A disordered region spans residues Asn-372–Arg-461. Composition is skewed to basic and acidic residues over residues Asp-378–Tyr-392 and Asn-400–Arg-461.

The protein belongs to the cyclophilin-type PPIase family. PPIL4 subfamily.

It localises to the nucleus. The catalysed reaction is [protein]-peptidylproline (omega=180) = [protein]-peptidylproline (omega=0). In terms of biological role, PPIases accelerate the folding of proteins. It catalyzes the cis-trans isomerization of proline imidic peptide bonds in oligopeptides. The chain is Peptidyl-prolyl cis-trans isomerase-like 4 (cyp6) from Emericella nidulans (strain FGSC A4 / ATCC 38163 / CBS 112.46 / NRRL 194 / M139) (Aspergillus nidulans).